The primary structure comprises 331 residues: Phenylalanine--tRNA ligase alpha subunit (331 aa).

Glu252 lines the Mg(2+) pocket.

This sequence belongs to the class-II aminoacyl-tRNA synthetase family. Phe-tRNA synthetase alpha subunit type 1 subfamily. Tetramer of two alpha and two beta subunits. Mg(2+) serves as cofactor.

It is found in the cytoplasm. It catalyses the reaction tRNA(Phe) + L-phenylalanine + ATP = L-phenylalanyl-tRNA(Phe) + AMP + diphosphate + H(+). The polypeptide is Phenylalanine--tRNA ligase alpha subunit (Xanthomonas axonopodis pv. citri (strain 306)).